Reading from the N-terminus, the 379-residue chain is Glutamate 5-kinase (379 aa).

Lys-19 contributes to the ATP binding site. Substrate-binding residues include Ser-59, Asp-146, and Asn-158. Residues 178 to 179 (TD) and 220 to 226 (TGGMATK) each bind ATP. Positions 285-363 (SGDIVIDQGA…KDIISILGYD (79 aa)) constitute a PUA domain.

This sequence belongs to the glutamate 5-kinase family.

The protein resides in the cytoplasm. The enzyme catalyses L-glutamate + ATP = L-glutamyl 5-phosphate + ADP. It participates in amino-acid biosynthesis; L-proline biosynthesis; L-glutamate 5-semialdehyde from L-glutamate: step 1/2. In terms of biological role, catalyzes the transfer of a phosphate group to glutamate to form L-glutamate 5-phosphate. The protein is Glutamate 5-kinase of Vibrio vulnificus (strain YJ016).